The chain runs to 957 residues: Glycine dehydrogenase (decarboxylating) (957 aa).

Lys708 is subject to N6-(pyridoxal phosphate)lysine.

This sequence belongs to the GcvP family. As to quaternary structure, the glycine cleavage system is composed of four proteins: P, T, L and H. The cofactor is pyridoxal 5'-phosphate.

It catalyses the reaction N(6)-[(R)-lipoyl]-L-lysyl-[glycine-cleavage complex H protein] + glycine + H(+) = N(6)-[(R)-S(8)-aminomethyldihydrolipoyl]-L-lysyl-[glycine-cleavage complex H protein] + CO2. The glycine cleavage system catalyzes the degradation of glycine. The P protein binds the alpha-amino group of glycine through its pyridoxal phosphate cofactor; CO(2) is released and the remaining methylamine moiety is then transferred to the lipoamide cofactor of the H protein. This Salmonella heidelberg (strain SL476) protein is Glycine dehydrogenase (decarboxylating).